The chain runs to 142 residues: Large ribosomal subunit protein bL19 (142 aa).

The protein belongs to the bacterial ribosomal protein bL19 family.

In terms of biological role, this protein is located at the 30S-50S ribosomal subunit interface and may play a role in the structure and function of the aminoacyl-tRNA binding site. In Rickettsia bellii (strain OSU 85-389), this protein is Large ribosomal subunit protein bL19.